Reading from the N-terminus, the 65-residue chain is MISTSSILILVFLLACFMATSAQWGYGGYGRGYGGYGGYGRGMYGGYGRGMYGGYGRGMYGGWGK.

The N-terminal stretch at 1-22 is a signal peptide; that stretch reads MISTSSILILVFLLACFMATSA. Tyr-29, Tyr-39, Tyr-47, and Tyr-55 each carry tyrosine amide. The residue at position 63 (Trp-63) is a Tryptophan amide.

Belongs to the YARP (YGGW-amide related peptide) family.

The protein resides in the secreted. Functionally, may have antimicrobial activity. In Caenorhabditis elegans, this protein is Neuropeptide-like protein 28 (nlp-28).